A 363-amino-acid polypeptide reads, in one-letter code: Probable iron/ascorbate oxidoreductase DDB_G0283291 (363 aa).

One can recognise a Fe2OG dioxygenase domain in the interval 197–306; the sequence is IFNYPSIISS…RISFPLFFDP (110 aa). Fe cation-binding residues include H230, D232, and H286. Position 297 (R297) interacts with 2-oxoglutarate.

It belongs to the iron/ascorbate-dependent oxidoreductase family. It depends on Fe(2+) as a cofactor.

This is Probable iron/ascorbate oxidoreductase DDB_G0283291 from Dictyostelium discoideum (Social amoeba).